Consider the following 101-residue polypeptide: NADH-ubiquinone oxidoreductase chain 4L (101 aa).

The next 3 membrane-spanning stretches (helical) occupy residues 5-25 (LNCTNISSLLFLVSLLGIFLN), 29-49 (ILVMLMSLEMMFLSISFNLIF), and 64-84 (LLILTVAAAESSIGLAILVIY).

This sequence belongs to the complex I subunit 4L family.

It localises to the mitochondrion membrane. The enzyme catalyses a ubiquinone + NADH + 5 H(+)(in) = a ubiquinol + NAD(+) + 4 H(+)(out). Functionally, core subunit of the mitochondrial membrane respiratory chain NADH dehydrogenase (Complex I) that is believed to belong to the minimal assembly required for catalysis. Complex I functions in the transfer of electrons from NADH to the respiratory chain. The immediate electron acceptor for the enzyme is believed to be ubiquinone. The protein is NADH-ubiquinone oxidoreductase chain 4L (ND4L) of Chondrus crispus (Carrageen Irish moss).